Reading from the N-terminus, the 380-residue chain is Succinyl-diaminopimelate desuccinylase (380 aa).

His-71 is a binding site for Zn(2+). Asp-73 is a catalytic residue. Zn(2+) is bound at residue Asp-104. The active-site Proton acceptor is Glu-138. Residues Glu-139, Glu-167, and His-353 each coordinate Zn(2+).

It belongs to the peptidase M20A family. DapE subfamily. Homodimer. Zn(2+) serves as cofactor. Requires Co(2+) as cofactor.

The enzyme catalyses N-succinyl-(2S,6S)-2,6-diaminopimelate + H2O = (2S,6S)-2,6-diaminopimelate + succinate. It participates in amino-acid biosynthesis; L-lysine biosynthesis via DAP pathway; LL-2,6-diaminopimelate from (S)-tetrahydrodipicolinate (succinylase route): step 3/3. Catalyzes the hydrolysis of N-succinyl-L,L-diaminopimelic acid (SDAP), forming succinate and LL-2,6-diaminopimelate (DAP), an intermediate involved in the bacterial biosynthesis of lysine and meso-diaminopimelic acid, an essential component of bacterial cell walls. The protein is Succinyl-diaminopimelate desuccinylase of Shewanella baltica (strain OS185).